Consider the following 627-residue polypeptide: UvrABC system protein C (627 aa).

The 80-residue stretch at 26 to 105 folds into the GIY-YIG domain; sequence PEPGVYFMRD…IKQHQPYFNV (80 aa). The 36-residue stretch at 215–250 folds into the UVR domain; it reads QELIDILSEQMEKAAEALNFEVAARIRDQIAGLKSL.

It belongs to the UvrC family. In terms of assembly, interacts with UvrB in an incision complex.

It localises to the cytoplasm. Functionally, the UvrABC repair system catalyzes the recognition and processing of DNA lesions. UvrC both incises the 5' and 3' sides of the lesion. The N-terminal half is responsible for the 3' incision and the C-terminal half is responsible for the 5' incision. The polypeptide is UvrABC system protein C (Nostoc sp. (strain PCC 7120 / SAG 25.82 / UTEX 2576)).